A 104-amino-acid polypeptide reads, in one-letter code: N(4)-acetylcytidine amidohydrolase (104 aa).

One can recognise an ASCH domain in the interval Met-7–Ile-93. Residue Lys-22 is the Proton acceptor of the active site. Residue Thr-25 is the Nucleophile of the active site. Residue Glu-75 is the Proton donor of the active site.

The protein belongs to the N(4)-acetylcytidine amidohydrolase family.

The enzyme catalyses N(4)-acetylcytidine + H2O = cytidine + acetate + H(+). It catalyses the reaction N(4)-acetyl-2'-deoxycytidine + H2O = 2'-deoxycytidine + acetate + H(+). The catalysed reaction is N(4)-acetylcytosine + H2O = cytosine + acetate + H(+). Functionally, catalyzes the hydrolysis of N(4)-acetylcytidine (ac4C). This is N(4)-acetylcytidine amidohydrolase from Vibrio vulnificus (strain CMCP6).